The following is a 96-amino-acid chain: Co-chaperonin GroES (96 aa).

This sequence belongs to the GroES chaperonin family. Heptamer of 7 subunits arranged in a ring. Interacts with the chaperonin GroEL.

The protein localises to the cytoplasm. In terms of biological role, together with the chaperonin GroEL, plays an essential role in assisting protein folding. The GroEL-GroES system forms a nano-cage that allows encapsulation of the non-native substrate proteins and provides a physical environment optimized to promote and accelerate protein folding. GroES binds to the apical surface of the GroEL ring, thereby capping the opening of the GroEL channel. This chain is Co-chaperonin GroES, found in Pelagibacter ubique (strain HTCC1062).